We begin with the raw amino-acid sequence, 198 residues long: Elongation factor Ts (198 aa).

Residues 81–84 form an involved in Mg(2+) ion dislocation from EF-Tu region; sequence TDFV.

This sequence belongs to the EF-Ts family.

It is found in the cytoplasm. In terms of biological role, associates with the EF-Tu.GDP complex and induces the exchange of GDP to GTP. It remains bound to the aminoacyl-tRNA.EF-Tu.GTP complex up to the GTP hydrolysis stage on the ribosome. This Dictyoglomus thermophilum (strain ATCC 35947 / DSM 3960 / H-6-12) protein is Elongation factor Ts.